Here is an 83-residue protein sequence, read N- to C-terminus: Vitellogenesis-inhibiting hormone (83 aa).

Intrachain disulfides connect C15/C52, C32/C48, and C35/C61.

Found in the sinus glands of both male and female. Found also in the brain; the neuroendocrine structures of the protocerebrum.

Its subcellular location is the secreted. Inhibits secondary vitellogenesis in females. Has no hyperglycemic or molt-inhibiting activity. The sequence is that of Vitellogenesis-inhibiting hormone from Armadillidium vulgare (Pillbug).